The sequence spans 382 residues: tRNA-specific 2-thiouridylase MnmA (382 aa).

Residues 18–25 and leucine 44 each bind ATP; that span reads AMSGGVDS. The Nucleophile role is filled by cysteine 112. Cysteine 112 and cysteine 209 are joined by a disulfide. Glycine 136 is an ATP binding site. Residues 159-161 form an interaction with tRNA region; that stretch reads RDQ. The Cysteine persulfide intermediate role is filled by cysteine 209.

It belongs to the MnmA/TRMU family.

Its subcellular location is the cytoplasm. The enzyme catalyses S-sulfanyl-L-cysteinyl-[protein] + uridine(34) in tRNA + AH2 + ATP = 2-thiouridine(34) in tRNA + L-cysteinyl-[protein] + A + AMP + diphosphate + H(+). In terms of biological role, catalyzes the 2-thiolation of uridine at the wobble position (U34) of tRNA, leading to the formation of s(2)U34. In Methylobacterium nodulans (strain LMG 21967 / CNCM I-2342 / ORS 2060), this protein is tRNA-specific 2-thiouridylase MnmA.